The primary structure comprises 385 residues: Putative transporter YthQ (385 aa).

8 helical membrane passes run 24-44 (AVID…FVIY), 67-87 (WLYA…FLME), 106-128 (YALL…IVLP), 133-155 (SVLI…HIFF), 176-193 (TLVR…IVFT), 197-214 (LLAL…IRSL), 304-324 (AFTV…LLVY), and 365-385 (ILHY…LLFT).

Its subcellular location is the cell membrane. The chain is Putative transporter YthQ (ythQ) from Bacillus subtilis (strain 168).